A 160-amino-acid chain; its full sequence is Small ribosomal subunit protein uS7 (160 aa).

It belongs to the universal ribosomal protein uS7 family. Part of the 30S ribosomal subunit. Contacts proteins S9 and S11.

Functionally, one of the primary rRNA binding proteins, it binds directly to 16S rRNA where it nucleates assembly of the head domain of the 30S subunit. Is located at the subunit interface close to the decoding center, probably blocks exit of the E-site tRNA. This is Small ribosomal subunit protein uS7 from Ehrlichia chaffeensis (strain ATCC CRL-10679 / Arkansas).